We begin with the raw amino-acid sequence, 142 residues long: MSLYVKCVKLSNNAIIPNRSMSGSAGYDLYSAYSYTVKPYNRILVRTDICLMIPDKCYGRISPRSGLSLNYNIDIGGGVIDSDYRGEIGIVFINNGCSDFNIKVGDRIAQIIFERVEYPIMEEVKCLEDTERGNSGFGSSGM.

The protein belongs to the dUTPase family. Mg(2+) serves as cofactor.

It catalyses the reaction dUTP + H2O = dUMP + diphosphate + H(+). Its function is as follows. This enzyme is involved in nucleotide metabolism: it produces dUMP, the immediate precursor of thymidine nucleotides and it decreases the intracellular concentration of dUTP so that uracil cannot be incorporated into DNA. The chain is Deoxyuridine 5'-triphosphate nucleotidohydrolase (DUT) from Swinepox virus (strain Kasza) (SWPV).